The primary structure comprises 344 residues: Probable electron transfer flavoprotein subunit alpha, mitochondrial (344 aa).

284 to 312 contacts FAD; the sequence is LYIAIGVSGAVQHLAGMKDSKVIVAINND.

It belongs to the ETF alpha-subunit/FixB family. Heterodimer of an alpha and a beta subunit. The cofactor is FAD.

The protein localises to the mitochondrion matrix. Its function is as follows. The electron transfer flavoprotein serves as a specific electron acceptor for several dehydrogenases, including five acyl-CoA dehydrogenases, glutaryl-CoA and sarcosine dehydrogenase. It transfers the electrons to the main mitochondrial respiratory chain via ETF-ubiquinone oxidoreductase (ETF dehydrogenase). This Saccharomyces cerevisiae (strain ATCC 204508 / S288c) (Baker's yeast) protein is Probable electron transfer flavoprotein subunit alpha, mitochondrial (AIM45).